Reading from the N-terminus, the 187-residue chain is MASTADFKNGLVLQIDGQLWSIVEFQHVKPGKGPAFVRTKLKNVLSGKVVDKTYNAGVKVETATVDRRDTTYLYRDGSDFVFMDSQDYEQHPLPESLVGDAARFLLEGMPVQVAFHDGAPLYIELPVTVEIVVTHTEPGLQGDRSSAGTKPATLETGAQINVPLFINTGDKLKVDSRDGGYLGRVNA.

This sequence belongs to the elongation factor P family.

It localises to the cytoplasm. The protein operates within protein biosynthesis; polypeptide chain elongation. Its function is as follows. Involved in peptide bond synthesis. Stimulates efficient translation and peptide-bond synthesis on native or reconstituted 70S ribosomes in vitro. Probably functions indirectly by altering the affinity of the ribosome for aminoacyl-tRNA, thus increasing their reactivity as acceptors for peptidyl transferase. In Mycobacterium marinum (strain ATCC BAA-535 / M), this protein is Elongation factor P.